A 185-amino-acid polypeptide reads, in one-letter code: Protein PBP4 (185 aa).

2 stretches are compositionally biased toward low complexity: residues Met-1 to Ser-24 and Ala-46 to Gln-62. 2 disordered regions span residues Met-1 to Glu-116 and Glu-147 to Lys-168. 3 stretches are compositionally biased toward polar residues: residues Pro-73–Ser-83, Lys-91–Asn-102, and Glu-147–Lys-166.

As to quaternary structure, interacts with IGO1, LSM12 and PBP1.

Its subcellular location is the cytoplasm. It localises to the nucleus. The chain is Protein PBP4 (PBP4) from Saccharomyces cerevisiae (strain ATCC 204508 / S288c) (Baker's yeast).